The following is a 262-amino-acid chain: Type II pantothenate kinase (262 aa).

An ATP-binding site is contributed by 7–14 (DAGGSLVK). The active-site Proton acceptor is Glu71. ATP is bound by residues Thr101, 119 to 123 (GGLLT), and Tyr135.

It belongs to the type II pantothenate kinase family. In terms of assembly, homodimer.

It localises to the cytoplasm. The enzyme catalyses (R)-pantothenate + ATP = (R)-4'-phosphopantothenate + ADP + H(+). It participates in cofactor biosynthesis; coenzyme A biosynthesis; CoA from (R)-pantothenate: step 1/5. Functionally, catalyzes the phosphorylation of pantothenate (Pan), the first step in CoA biosynthesis. This is Type II pantothenate kinase from Oceanobacillus iheyensis (strain DSM 14371 / CIP 107618 / JCM 11309 / KCTC 3954 / HTE831).